The following is a 448-amino-acid chain: Probable glycine dehydrogenase (decarboxylating) subunit 1 (448 aa).

The protein belongs to the GcvP family. N-terminal subunit subfamily. The glycine cleavage system is composed of four proteins: P, T, L and H. In this organism, the P 'protein' is a heterodimer of two subunits.

The enzyme catalyses N(6)-[(R)-lipoyl]-L-lysyl-[glycine-cleavage complex H protein] + glycine + H(+) = N(6)-[(R)-S(8)-aminomethyldihydrolipoyl]-L-lysyl-[glycine-cleavage complex H protein] + CO2. The glycine cleavage system catalyzes the degradation of glycine. The P protein binds the alpha-amino group of glycine through its pyridoxal phosphate cofactor; CO(2) is released and the remaining methylamine moiety is then transferred to the lipoamide cofactor of the H protein. This chain is Probable glycine dehydrogenase (decarboxylating) subunit 1, found in Exiguobacterium sibiricum (strain DSM 17290 / CCUG 55495 / CIP 109462 / JCM 13490 / 255-15).